The following is a 112-amino-acid chain: PTS system lactose-specific EIIA component (112 aa).

Positions 6 to 104 constitute a PTS EIIA type-3 domain; sequence EEISMVGFAL…TRYMIRMFKR (99 aa). The active-site Tele-phosphohistidine intermediate is the His80. His80 is subject to Phosphohistidine; by HPr. Asp83 is a binding site for Mg(2+).

As to quaternary structure, homotrimer. The cofactor is Mg(2+).

Its subcellular location is the cytoplasm. The phosphoenolpyruvate-dependent sugar phosphotransferase system (sugar PTS), a major carbohydrate active transport system, catalyzes the phosphorylation of incoming sugar substrates concomitantly with their translocation across the cell membrane. The enzyme II LacEF PTS system is involved in lactose transport. This is PTS system lactose-specific EIIA component from Lacticaseibacillus casei (Lactobacillus casei).